Consider the following 401-residue polypeptide: N-acetyllactosaminide beta-1,6-N-acetylglucosaminyl-transferase (401 aa).

Residues 1–7 (MPPSVRY) lie on the Cytoplasmic side of the membrane. The chain crosses the membrane as a helical; Signal-anchor for type II membrane protein span at residues 8–28 (FFIVSVTTVIVFIVLYVLSFG). The Lumenal segment spans residues 29 to 401 (GDQSYQKLNI…EIAIQPSWYF (373 aa)). Residues Asn37, Asn255, Asn315, and Asn389 are each glycosylated (N-linked (GlcNAc...) asparagine).

Belongs to the glycosyltransferase 14 family.

The protein resides in the golgi apparatus membrane. It catalyses the reaction a beta-D-Gal-(1-&gt;4)-beta-D-GlcNAc-(1-&gt;3)-beta-D-Gal-(1-&gt;4)-beta-D-GlcNAc derivative + UDP-N-acetyl-alpha-D-glucosamine = a beta-D-Gal-(1-&gt;4)-beta-D-GlcNAc-(1-&gt;3)-[beta-D-GlcNAc-(1-&gt;6)]-beta-D-Gal-(1-&gt;4)-N-acetyl-beta-D-glucosaminyl derivative + UDP + H(+). It functions in the pathway protein modification; protein glycosylation. Branching enzyme that converts linear into branched poly-N-acetyllactosaminoglycans. Introduces the blood group I antigen during embryonic development. It is closely associated with the development and maturation of erythroid cells. The sequence is that of N-acetyllactosaminide beta-1,6-N-acetylglucosaminyl-transferase (Gcnt2) from Mus musculus (Mouse).